The sequence spans 318 residues: Aspartate carbamoyltransferase catalytic subunit (318 aa).

Carbamoyl phosphate-binding residues include Arg59 and Thr60. Lys87 contacts L-aspartate. Residues Arg109, His137, and Gln140 each coordinate carbamoyl phosphate. L-aspartate-binding residues include Arg170 and Arg224. Carbamoyl phosphate contacts are provided by Gly265 and Pro266.

This sequence belongs to the aspartate/ornithine carbamoyltransferase superfamily. ATCase family. Heterododecamer (2C3:3R2) of six catalytic PyrB chains organized as two trimers (C3), and six regulatory PyrI chains organized as three dimers (R2).

It carries out the reaction carbamoyl phosphate + L-aspartate = N-carbamoyl-L-aspartate + phosphate + H(+). It participates in pyrimidine metabolism; UMP biosynthesis via de novo pathway; (S)-dihydroorotate from bicarbonate: step 2/3. In terms of biological role, catalyzes the condensation of carbamoyl phosphate and aspartate to form carbamoyl aspartate and inorganic phosphate, the committed step in the de novo pyrimidine nucleotide biosynthesis pathway. The chain is Aspartate carbamoyltransferase catalytic subunit from Rhizobium etli (strain CIAT 652).